Consider the following 383-residue polypeptide: Protein KES1 (383 aa).

The segment covering 317–339 (FETASKDKARIENAQRQKRKDEA) has biased composition (basic and acidic residues). A disordered region spans residues 317-346 (FETASKDKARIENAQRQKRKDEAAAGTPHQ).

Belongs to the OSBP family.

In terms of biological role, lipid transporter involved in lipid countertransport between the Golgi complex and membranes of the endoplasmic reticulum: specifically exchanges sterol with phosphatidylinositol 4-phosphate (PI4P), delivering sterol to the Golgi in exchange for PI4P, which is degraded by the SAC1 phosphatase in the endoplasmic reticulum. This Mycosarcoma maydis (Corn smut fungus) protein is Protein KES1 (KES1).